A 156-amino-acid chain; its full sequence is Maintenance of carboxysome distribution protein B (156 aa).

The segment at 1 to 55 (MSNNALDRLINKQKPKVPPRNDVVSESVSNDIKTQGQQELNTSLPPSDTKATPEE) is required for interaction with McdA:DNA complex. The interval 1–79 (MSNNALDRLI…QKPKLSPDTF (79 aa)) is disordered. Residues 24-50 (VSESVSNDIKTQGQQELNTSLPPSDTK) are compositionally biased toward polar residues. Over residues 51-63 (ATPEEMPTSHESE) the composition is skewed to basic and acidic residues. Positions 122 to 156 (PEELAQVIQLAQERLSQRKAIADYKRAKTMQERFL) form a coiled coil.

Homodimerizes; may exist in higher order oligomers in solution. Forms a complex with McdA:DNA. Homohexamerizes, interacts with shell components of the carboxysome.

It is found in the carboxysome. McdA and McdB together mediate carboxysome (Cb) spacing, size, ultrastructure and probably inheritance in the cell, together they prevent Cb aggregation. McdA is an ATPase that forms dynamic gradients on the nucleoid in response to adapter protein McdB, which associates with carboxysomes. The interplay between McdA gradients on the nucleoid and McdB-bound carboxysomes result in the equal spacing of Cbs along the cell length. Stimulates the ATPase activity of McdA, causing McdA to be released from DNA. Undergoes liquid-liquid phase separation. Functionally, incorrect positioning (aggregation) of carboxysomes results in reduced CO(2) fixation by encapsulated ribulose-1,5-bisphosphate carboxylase (RuBisCO, cbbL/cbbS), which leads to slower growth. The chain is Maintenance of carboxysome distribution protein B from Gloeothece citriformis (strain PCC 7424) (Cyanothece sp. (strain PCC 7424)).